The sequence spans 173 residues: Photosystem I assembly protein Ycf3 (173 aa).

TPR repeat units lie at residues 35 to 68 (AYVY…EENA), 72 to 105 (GETL…NPKQ), and 120 to 153 (GRTA…NPGG).

This sequence belongs to the Ycf3 family.

The protein resides in the cellular thylakoid membrane. Functionally, essential for the assembly of the photosystem I (PSI) complex. May act as a chaperone-like factor to guide the assembly of the PSI subunits. The chain is Photosystem I assembly protein Ycf3 from Synechococcus sp. (strain CC9311).